Here is a 167-residue protein sequence, read N- to C-terminus: Ribonuclease H (167 aa).

Residues 1–143 (MYKQIEIFTD…CDQLARKAAK (143 aa)) enclose the RNase H type-1 domain. 4 residues coordinate Mg(2+): Asp10, Glu48, Asp70, and Asp135.

This sequence belongs to the RNase H family. As to quaternary structure, monomer. Mg(2+) serves as cofactor.

It is found in the cytoplasm. It carries out the reaction Endonucleolytic cleavage to 5'-phosphomonoester.. In terms of biological role, endonuclease that specifically degrades the RNA of RNA-DNA hybrids. This Blochmanniella floridana protein is Ribonuclease H.